A 324-amino-acid chain; its full sequence is Biotin synthase (324 aa).

Residues 37 to 264 enclose the Radical SAM core domain; that stretch reads NEVQVAALMN…ASYVRLAAGR (228 aa). [4Fe-4S] cluster contacts are provided by C52, C56, and C59. [2Fe-2S] cluster-binding residues include C96, C127, C187, and R259.

The protein belongs to the radical SAM superfamily. Biotin synthase family. As to quaternary structure, homodimer. [4Fe-4S] cluster serves as cofactor. It depends on [2Fe-2S] cluster as a cofactor.

It catalyses the reaction (4R,5S)-dethiobiotin + (sulfur carrier)-SH + 2 reduced [2Fe-2S]-[ferredoxin] + 2 S-adenosyl-L-methionine = (sulfur carrier)-H + biotin + 2 5'-deoxyadenosine + 2 L-methionine + 2 oxidized [2Fe-2S]-[ferredoxin]. It functions in the pathway cofactor biosynthesis; biotin biosynthesis; biotin from 7,8-diaminononanoate: step 2/2. Its function is as follows. Catalyzes the conversion of dethiobiotin (DTB) to biotin by the insertion of a sulfur atom into dethiobiotin via a radical-based mechanism. This chain is Biotin synthase, found in Anaplasma marginale (strain Florida).